The chain runs to 645 residues: 1,4-alpha-glucan branching enzyme GlgB (645 aa).

Asp-309 acts as the Nucleophile in catalysis. Catalysis depends on Glu-352, which acts as the Proton donor. The segment at 619-645 is disordered; that stretch reads VKTRKGSKKQDGSKTKVRSNVTSRGKR. Polar residues predominate over residues 636-645; the sequence is RSNVTSRGKR.

It belongs to the glycosyl hydrolase 13 family. GlgB subfamily. Monomer.

The enzyme catalyses Transfers a segment of a (1-&gt;4)-alpha-D-glucan chain to a primary hydroxy group in a similar glucan chain.. The protein operates within glycan biosynthesis; glycogen biosynthesis. In terms of biological role, catalyzes the formation of the alpha-1,6-glucosidic linkages in glycogen by scission of a 1,4-alpha-linked oligosaccharide from growing alpha-1,4-glucan chains and the subsequent attachment of the oligosaccharide to the alpha-1,6 position. This chain is 1,4-alpha-glucan branching enzyme GlgB, found in Bacillus cereus (strain Q1).